Reading from the N-terminus, the 404-residue chain is Putative gustatory receptor 94a (404 aa).

Residues 1-11 (MDFTSDYAHRR) are Cytoplasmic-facing. The chain crosses the membrane as a helical span at residues 12 to 32 (MVKFLTIILIGFMTVFGLLAN). Topologically, residues 33 to 43 (RYRAGRRERFR) are extracellular. A helical membrane pass occupies residues 44–64 (FSKANLAFASLWAIAFSLVYG). The Cytoplasmic portion of the chain corresponds to 65–133 (RQIYKEYQEG…RLDSRSLYIS (69 aa)). The helical transmembrane segment at 134 to 154 (IVLALVKTVAFPLTIEVAFIL) threads the bilayer. Topologically, residues 155–171 (QQRRQHPEMSLIWTLYR) are extracellular. Residues 172-192 (LFPLIISNFLNNCYFGAMVVV) traverse the membrane as a helical segment. The Cytoplasmic portion of the chain corresponds to 193 to 260 (KEILYALNRR…HSGKYLTPMS (68 aa)). The chain crosses the membrane as a helical span at residues 261-281 (LSMILSLICHLLGITVGFYSL). The Extracellular portion of the chain corresponds to 282–296 (YYAIADTLIMGKPYD). The helical transmembrane segment at 297 to 317 (GLGSLINLVFLSISLAEITLL) threads the bilayer. At 318-376 (THLCNHLLVATRRSAVILQEMNLQHADSRYRQAVHGFTLLVTVTKYQIKPLGLYELDMR) the chain is on the cytoplasmic side. The helical transmembrane segment at 377–397 (LISNVFSAVASFLLILVQADL) threads the bilayer. Topologically, residues 398–404 (SQRFKMQ) are extracellular.

It belongs to the insect chemoreceptor superfamily. Gustatory receptor (GR) family. Gr22e subfamily. In terms of tissue distribution, in larvae, is expressed in neurons of the terminal external chemosensory organ.

It localises to the cell membrane. Functionally, probable gustatory receptor which mediates acceptance or avoidance behavior, depending on its substrates. The polypeptide is Putative gustatory receptor 94a (Gr94a) (Drosophila melanogaster (Fruit fly)).